Here is a 380-residue protein sequence, read N- to C-terminus: Cytochrome b (380 aa).

4 helical membrane-spanning segments follow: residues 33–53 (LGSL…FLAM), 77–98 (WVIR…FLHI), 113–133 (WNIG…GYVL), and 178–198 (FFTF…LHLL). Heme b contacts are provided by histidine 83 and histidine 97. 2 residues coordinate heme b: histidine 182 and histidine 196. Histidine 201 contributes to the a ubiquinone binding site. 4 helical membrane passes run 226–246 (TKDI…VLFS), 288–308 (LGGV…PMLH), 320–340 (LSQL…WIGG), and 347–367 (FITI…ILVP).

The protein belongs to the cytochrome b family. As to quaternary structure, the cytochrome bc1 complex contains 11 subunits: 3 respiratory subunits (MT-CYB, CYC1 and UQCRFS1), 2 core proteins (UQCRC1 and UQCRC2) and 6 low-molecular weight proteins (UQCRH/QCR6, UQCRB/QCR7, UQCRQ/QCR8, UQCR10/QCR9, UQCR11/QCR10 and a cleavage product of UQCRFS1). This cytochrome bc1 complex then forms a dimer. It depends on heme b as a cofactor.

The protein resides in the mitochondrion inner membrane. Functionally, component of the ubiquinol-cytochrome c reductase complex (complex III or cytochrome b-c1 complex) that is part of the mitochondrial respiratory chain. The b-c1 complex mediates electron transfer from ubiquinol to cytochrome c. Contributes to the generation of a proton gradient across the mitochondrial membrane that is then used for ATP synthesis. The protein is Cytochrome b (MT-CYB) of Nomascus leucogenys (Northern white-cheeked gibbon).